We begin with the raw amino-acid sequence, 460 residues long: Probable protein phosphatase 2C 38 (460 aa).

2 disordered regions span residues 1–30 (MVAV…AVPS) and 83–111 (RPMR…GRIA). Positions 100–109 (PRDREPRDGR) are enriched in basic and acidic residues. Positions 118-432 (AASLYTMRGN…DDCAVVCLFL (315 aa)) constitute a PPM-type phosphatase domain. The Mn(2+) site is built by Asp154 and Gly155. A disordered region spans residues 192-219 (VTSSMTEGGGTERMDRDTETPLGTEENG). Basic and acidic residues predominate over residues 201 to 210 (GTERMDRDTE). Mn(2+) is bound by residues Asp377 and Asp423.

It belongs to the PP2C family. Requires Mg(2+) as cofactor. The cofactor is Mn(2+).

The catalysed reaction is O-phospho-L-seryl-[protein] + H2O = L-seryl-[protein] + phosphate. The enzyme catalyses O-phospho-L-threonyl-[protein] + H2O = L-threonyl-[protein] + phosphate. This chain is Probable protein phosphatase 2C 38, found in Oryza sativa subsp. japonica (Rice).